The chain runs to 236 residues: Ubiquitin carboxyl-terminal hydrolase YUH1 (236 aa).

Positions 7–233 (AVVPIESNPE…LNFAMLGLGP (227 aa)) constitute a UCH catalytic domain. Residues 10–15 (PIESNP) form an interaction with ubiquitin region. Catalysis depends on Cys-90, which acts as the Nucleophile. Residues 149-157 (FSTGQSEAP) form an interaction with ubiquitin region. Residue His-166 is the Proton donor of the active site. An interaction with ubiquitin region spans residues 219 to 228 (NEEDVLNFAM).

Belongs to the peptidase C12 family.

It catalyses the reaction Thiol-dependent hydrolysis of ester, thioester, amide, peptide and isopeptide bonds formed by the C-terminal Gly of ubiquitin (a 76-residue protein attached to proteins as an intracellular targeting signal).. Functionally, deubiquitinating enzyme (DUB) that controls levels of cellular ubiquitin through processing of ubiquitin precursors and ubiquitinated proteins. Thiol protease that recognizes and hydrolyzes a peptide bond at the C-terminal glycine of either ubiquitin or RUB1. Preferentially cleaves ubiquitin from peptides and small adducts. The protein is Ubiquitin carboxyl-terminal hydrolase YUH1 (YUH1) of Saccharomyces cerevisiae (strain ATCC 204508 / S288c) (Baker's yeast).